The primary structure comprises 377 residues: Succinyl-diaminopimelate desuccinylase (377 aa).

His68 is a binding site for Zn(2+). Asp70 is a catalytic residue. Residue Asp101 coordinates Zn(2+). The active-site Proton acceptor is the Glu135. Zn(2+)-binding residues include Glu136, Glu164, and His350.

The protein belongs to the peptidase M20A family. DapE subfamily. In terms of assembly, homodimer. Zn(2+) serves as cofactor. It depends on Co(2+) as a cofactor.

The enzyme catalyses N-succinyl-(2S,6S)-2,6-diaminopimelate + H2O = (2S,6S)-2,6-diaminopimelate + succinate. Its pathway is amino-acid biosynthesis; L-lysine biosynthesis via DAP pathway; LL-2,6-diaminopimelate from (S)-tetrahydrodipicolinate (succinylase route): step 3/3. Catalyzes the hydrolysis of N-succinyl-L,L-diaminopimelic acid (SDAP), forming succinate and LL-2,6-diaminopimelate (DAP), an intermediate involved in the bacterial biosynthesis of lysine and meso-diaminopimelic acid, an essential component of bacterial cell walls. The sequence is that of Succinyl-diaminopimelate desuccinylase from Vibrio vulnificus (strain CMCP6).